Here is a 191-residue protein sequence, read N- to C-terminus: Ribonuclease HII (191 aa).

The region spanning 16–191 (INLIGIDEAG…KLHRKSFKLL (176 aa)) is the RNase H type-2 domain. Positions 22, 23, and 110 each coordinate a divalent metal cation.

The protein belongs to the RNase HII family. It depends on Mn(2+) as a cofactor. Mg(2+) serves as cofactor.

It is found in the cytoplasm. It catalyses the reaction Endonucleolytic cleavage to 5'-phosphomonoester.. In terms of biological role, endonuclease that specifically degrades the RNA of RNA-DNA hybrids. The sequence is that of Ribonuclease HII (rnhB) from Campylobacter jejuni subsp. jejuni serotype O:2 (strain ATCC 700819 / NCTC 11168).